The following is a 1676-amino-acid chain: Anucleate primary sterigmata protein A (1676 aa).

Over residues 1–11 (MEDSQRGNASM) the composition is skewed to polar residues. Residues 1-35 (MEDSQRGNASMMSMMDDPFVVSPEGARDPPSTNQY) are disordered. A coiled-coil region spans residues 51-127 (AQAKRALEAH…EIGQETARAF (77 aa)). 7 disordered regions span residues 160 to 180 (QATN…NQSN), 353 to 394 (RLRQ…TPRH), 439 to 712 (DEVE…SRRP), 1027 to 1050 (GTST…PVEP), 1176 to 1201 (PLGA…DQGA), 1220 to 1270 (VRPL…QASS), and 1297 to 1354 (PASA…RRSS). Low complexity predominate over residues 163–172 (NSPSKVSVPS). Coiled-coil stretches lie at residues 193–359 (TSLL…QQEA) and 408–453 (HAHR…AANG). Composition is skewed to basic and acidic residues over residues 355–370 (RQQE…RPHD), 439–448 (DEVEQRRRDS), 461–470 (TKAETRKPAR), 479–489 (KKAEVEIHDSD), and 503–522 (ASND…RSDA). Residues 593 to 602 (SYYSTASTSA) show a composition bias toward low complexity. Polar residues predominate over residues 609-620 (DPGTPSISQFST). Over residues 623-636 (YRLRKKRSVLRKIR) the composition is skewed to basic residues. Polar residues predominate over residues 647 to 664 (SRPSSARESPSTSFTRDT). Over residues 678-687 (AEVDGDEDDF) the composition is skewed to acidic residues. A compositionally biased stretch (low complexity) spans 1032–1042 (TVEFSVSSISS). Positions 1191 to 1201 (SGSSNQADQGA) are enriched in polar residues. Over residues 1314–1341 (RASSQQRPRTPNESALQVGSAKTTTSRA) the composition is skewed to polar residues. In terms of domain architecture, PH spans 1393 to 1504 (QTMIGEFLWK…WFNALSYLLV (112 aa)). A compositionally biased stretch (acidic residues) spans 1511–1524 (EEAENGVTLDDIDE). Disordered regions lie at residues 1511–1589 (EEAE…QASS) and 1654–1676 (HDVS…HSHH). Polar residues-rich tracts occupy residues 1534–1548 (RQTA…QSRG) and 1580–1589 (YSDQARQASS).

It is found in the membrane. Required for nuclear positioning and completion of asexual development. The chain is Anucleate primary sterigmata protein A (apsA) from Emericella nidulans (strain FGSC A4 / ATCC 38163 / CBS 112.46 / NRRL 194 / M139) (Aspergillus nidulans).